Here is a 272-residue protein sequence, read N- to C-terminus: Orotidine 5'-phosphate decarboxylase (272 aa).

Lys95 (proton donor) is an active-site residue.

It belongs to the OMP decarboxylase family. Type 2 subfamily.

It catalyses the reaction orotidine 5'-phosphate + H(+) = UMP + CO2. Its pathway is pyrimidine metabolism; UMP biosynthesis via de novo pathway; UMP from orotate: step 2/2. The polypeptide is Orotidine 5'-phosphate decarboxylase (Bordetella petrii (strain ATCC BAA-461 / DSM 12804 / CCUG 43448)).